A 452-amino-acid chain; its full sequence is uncharacterized protein (452 aa).

The protein belongs to the HypE family.

This is an uncharacterized protein from Methanocaldococcus jannaschii (strain ATCC 43067 / DSM 2661 / JAL-1 / JCM 10045 / NBRC 100440) (Methanococcus jannaschii).